The primary structure comprises 391 residues: MRKLFTSESVTEGHPDKICDQISDAILDAILEKDPNGRVACETTVTTGIVNVMGEISTNCYVDIPKIVRKTVREIGYTRAKYGFDCDTCAVVTSIDEQSADIAMGVDEALESKKGEMDKIDAVGAGDQGMMFGYATNETKEFMPMPIALAHRLSRRLAEVRKDGTLDYLRPDGKTQVTIEYEDDKPVRVDAIVISTQHGPEIGHEQIEKDLIEKVVKYVISPELLDENTKYYINPTGRFVVGGPQGDSGLTGRKIIVDTYGGYGRHGGGAFSGKDPTKVDRSAAYAARWVAKNLVAAGIADKLEIQLAYAIGVAKPVSISVDTFGTGKIEESKIVEIVEKVFDLRPGAIIRDLNLKRPIYRQVAAYGHFGRLDVELPWEQLDRVEAIKKYL.

Position 14 (H14) interacts with ATP. D16 is a Mg(2+) binding site. E42 lines the K(+) pocket. 2 residues coordinate L-methionine: E55 and Q98. Positions Q98–E108 are flexible loop. ATP is bound by residues D172 to K174, R238 to F239, D247, R253 to K254, A270, and K274. D247 contacts L-methionine. K278 is an L-methionine binding site.

This sequence belongs to the AdoMet synthase family. As to quaternary structure, homotetramer; dimer of dimers. The cofactor is Mg(2+). K(+) serves as cofactor.

The protein localises to the cytoplasm. It carries out the reaction L-methionine + ATP + H2O = S-adenosyl-L-methionine + phosphate + diphosphate. It functions in the pathway amino-acid biosynthesis; S-adenosyl-L-methionine biosynthesis; S-adenosyl-L-methionine from L-methionine: step 1/1. Catalyzes the formation of S-adenosylmethionine (AdoMet) from methionine and ATP. The overall synthetic reaction is composed of two sequential steps, AdoMet formation and the subsequent tripolyphosphate hydrolysis which occurs prior to release of AdoMet from the enzyme. In Clostridium acetobutylicum (strain ATCC 824 / DSM 792 / JCM 1419 / IAM 19013 / LMG 5710 / NBRC 13948 / NRRL B-527 / VKM B-1787 / 2291 / W), this protein is S-adenosylmethionine synthase.